Consider the following 520-residue polypeptide: Probable glycerol-3-phosphate acyltransferase 3 (520 aa).

Transmembrane regions (helical) follow at residues Ile5–Leu20, Tyr64–Leu84, Ile88–Ile108, Thr264–Ala284, and Leu286–Cys306. Residues His334–Asp339 carry the HXXXXD motif motif.

This sequence belongs to the GPAT/DAPAT family. In terms of tissue distribution, widely expressed at low level. Expressed at higher level in seedlings and leaves.

The protein localises to the membrane. The catalysed reaction is sn-glycerol 3-phosphate + an acyl-CoA = a 1-acyl-sn-glycero-3-phosphate + CoA. The protein operates within phospholipid metabolism; CDP-diacylglycerol biosynthesis; CDP-diacylglycerol from sn-glycerol 3-phosphate: step 1/3. In terms of biological role, esterifies acyl-group from acyl-ACP to the sn-1 position of glycerol-3-phosphate, an essential step in glycerolipid biosynthesis. This chain is Probable glycerol-3-phosphate acyltransferase 3 (GPAT3), found in Arabidopsis thaliana (Mouse-ear cress).